A 951-amino-acid polypeptide reads, in one-letter code: Protein translocase subunit SecA 1 (951 aa).

ATP is bound by residues Q87, 105–109 (GEGKT), and D525. The segment at 911–942 (PVVSADRSSRDPGNPASWGKVGRNEDCPCGSG) is disordered. Zn(2+)-binding residues include C937, C939, C948, and H949.

This sequence belongs to the SecA family. In terms of assembly, monomer and homodimer. Part of the essential Sec protein translocation apparatus which comprises SecA, SecYEG and auxiliary proteins SecDF-YajC and YidC. Zn(2+) serves as cofactor.

It is found in the cell inner membrane. The protein resides in the cytoplasm. It catalyses the reaction ATP + H2O + cellular proteinSide 1 = ADP + phosphate + cellular proteinSide 2.. Part of the Sec protein translocase complex. Interacts with the SecYEG preprotein conducting channel. Has a central role in coupling the hydrolysis of ATP to the transfer of proteins into and across the cell membrane, serving both as a receptor for the preprotein-SecB complex and as an ATP-driven molecular motor driving the stepwise translocation of polypeptide chains across the membrane. This chain is Protein translocase subunit SecA 1, found in Nitrobacter hamburgensis (strain DSM 10229 / NCIMB 13809 / X14).